Reading from the N-terminus, the 102-residue chain is Large ribosomal subunit protein bL21 (102 aa).

This sequence belongs to the bacterial ribosomal protein bL21 family. In terms of assembly, part of the 50S ribosomal subunit. Contacts protein L20.

In terms of biological role, this protein binds to 23S rRNA in the presence of protein L20. The protein is Large ribosomal subunit protein bL21 of Nitratidesulfovibrio vulgaris (strain ATCC 29579 / DSM 644 / CCUG 34227 / NCIMB 8303 / VKM B-1760 / Hildenborough) (Desulfovibrio vulgaris).